The primary structure comprises 466 residues: Glutamate--tRNA ligase 1 (466 aa).

The short motif at 9-19 (PSPTGLLHIGN) is the 'HIGH' region element. Residues 238 to 242 (KLSKR) carry the 'KMSKS' region motif. K241 contacts ATP.

The protein belongs to the class-I aminoacyl-tRNA synthetase family. Glutamate--tRNA ligase type 1 subfamily. Monomer.

Its subcellular location is the cytoplasm. It carries out the reaction tRNA(Glu) + L-glutamate + ATP = L-glutamyl-tRNA(Glu) + AMP + diphosphate. In terms of biological role, catalyzes the attachment of glutamate to tRNA(Glu) in a two-step reaction: glutamate is first activated by ATP to form Glu-AMP and then transferred to the acceptor end of tRNA(Glu). This chain is Glutamate--tRNA ligase 1, found in Gluconacetobacter diazotrophicus (strain ATCC 49037 / DSM 5601 / CCUG 37298 / CIP 103539 / LMG 7603 / PAl5).